Consider the following 105-residue polypeptide: Met repressor (105 aa).

It belongs to the MetJ family. Homodimer.

The protein resides in the cytoplasm. In terms of biological role, this regulatory protein, when combined with SAM (S-adenosylmethionine) represses the expression of the methionine regulon and of enzymes involved in SAM synthesis. This chain is Met repressor, found in Glaesserella parasuis serovar 5 (strain SH0165) (Haemophilus parasuis).